A 173-amino-acid chain; its full sequence is Dual-action ribosomal maturation protein DarP (173 aa).

It belongs to the DarP family.

Its subcellular location is the cytoplasm. Its function is as follows. Member of a network of 50S ribosomal subunit biogenesis factors which assembles along the 30S-50S interface, preventing incorrect 23S rRNA structures from forming. Promotes peptidyl transferase center (PTC) maturation. This Pseudomonas putida (strain W619) protein is Dual-action ribosomal maturation protein DarP.